Here is a 272-residue protein sequence, read N- to C-terminus: Aquaporin-1 (272 aa).

The Cytoplasmic portion of the chain corresponds to 1–11 (MASEFKKKLFW). A helical transmembrane segment spans residues 12–29 (RAVVAEFLAMILFIFISI). Topologically, residues 30–48 (GSALGFHYPIKSNQTTGAV) are extracellular. N42 carries an N-linked (GlcNAc...) asparagine glycan. A helical membrane pass occupies residues 49-67 (QDNVKVSLAFGLSIATLAQ). The Cytoplasmic segment spans residues 68 to 70 (SVG). An intramembrane segment occupies 71–84 (HISGAHLNPAVTLG). Positions 78–80 (NPA) match the NPA 1 motif. Topologically, residues 85–92 (LLLSCQIS) are cytoplasmic. The chain crosses the membrane as a helical span at residues 93–111 (ILRAIMYIIAQCVGAIVAT). Over 112–135 (VILSGITSSLPDNSLGLNALAPGV) the chain is Extracellular. The helical transmembrane segment at 136–155 (NSGQGLGIEIIGTLQLVLCV) threads the bilayer. Over 156–166 (LATTDRRRRRD) the chain is Cytoplasmic. Residues 167-184 (LGDSGPLAIGFSVALGHL) form a helical membrane-spanning segment. Over 185-189 (LAIDY) the chain is Extracellular. An intramembrane segment occupies 190–202 (TGCGINPARSFGS). Positions 195 to 197 (NPA) match the NPA 2 motif. Over 203 to 209 (SVITHNF) the chain is Extracellular. A helical membrane pass occupies residues 210 to 227 (QDHWIFWVGPFIGAALAV). Topologically, residues 228–272 (LIYDFILAPRSSDLTDRVKVWTSGQVEEYDLDADDINSRVEMKPK) are cytoplasmic. S250 is subject to Phosphoserine. Phosphotyrosine is present on Y256. The residue at position 265 (S265) is a Phosphoserine.

Belongs to the MIP/aquaporin (TC 1.A.8) family. As to quaternary structure, homotetramer; each monomer provides an independent water pore. Component of the ankyrin-1 complex in the erythrocyte, composed of ANK1, RHCE, RHAG, SLC4A1, EPB42, GYPA, GYPB and AQP1. Interacts with EPHB2; involved in endolymph production in the inner ear. Identified in a complex with STOM. Interacts (via the N-terminal) with ANK1 (via ANK 1-5 repeats). Interacts (via the C-terminal) with EPB42. As to expression, detected in fetal kidney (at protein level). Detected in fetal kidney.

The protein localises to the cell membrane. It carries out the reaction H2O(in) = H2O(out). It catalyses the reaction nitric oxide(out) = nitric oxide(in). The catalysed reaction is CO2(out) = CO2(in). The enzyme catalyses glycerol(in) = glycerol(out). It carries out the reaction H2O2(out) = H2O2(in). It catalyses the reaction K(+)(in) = K(+)(out). The catalysed reaction is Na(+)(in) = Na(+)(out). Forms a water channel that facilitates the transport of water across cell membranes, playing a crucial role in water homeostasis in various tissues. Could also be permeable to small solutes including hydrogen peroxide, glycerol and gases such as amonnia (NH3), nitric oxide (NO) and carbon dioxide (CO2). Recruited to the ankyrin-1 complex, a multiprotein complex of the erythrocyte membrane, it could be part of a CO2 metabolon, linking facilitated diffusion of CO2 across the membrane, anion exchange of Cl(-)/HCO3(-) and interconversion of dissolved CO2 and carbonic acid in the cytosol. In vitro, it shows non-selective gated cation channel activity and may be permeable to cations like K(+) and Na(+) in vivo. The chain is Aquaporin-1 from Ovis aries (Sheep).